A 534-amino-acid polypeptide reads, in one-letter code: CTP synthase (534 aa).

The tract at residues 1-267 is amidoligase domain; sequence MTKYIFVTGG…DQIVCDHLKL (267 aa). CTP is bound at residue Ser13. A UTP-binding site is contributed by Ser13. Position 14 to 19 (14 to 19) interacts with ATP; that stretch reads SIGKGI. Tyr54 provides a ligand contact to L-glutamine. Residue Asp71 coordinates ATP. Residues Asp71 and Glu141 each coordinate Mg(2+). Residues 148–150, 188–193, and Lys224 each bind CTP; these read DIE and KTKPTQ. Residues 188–193 and Lys224 contribute to the UTP site; that span reads KTKPTQ. ATP is bound at residue 240 to 242; that stretch reads RDV. Residues 292-534 form the Glutamine amidotransferase type-1 domain; the sequence is KIALVGKYVE…FVTAAIKNSN (243 aa). Gly354 is an L-glutamine binding site. Residue Cys381 is the Nucleophile; for glutamine hydrolysis of the active site. L-glutamine is bound by residues 382–385, Glu405, and Arg463; that span reads LGMQ. Active-site residues include His508 and Glu510.

The protein belongs to the CTP synthase family. Homotetramer.

It catalyses the reaction UTP + L-glutamine + ATP + H2O = CTP + L-glutamate + ADP + phosphate + 2 H(+). The catalysed reaction is L-glutamine + H2O = L-glutamate + NH4(+). The enzyme catalyses UTP + NH4(+) + ATP = CTP + ADP + phosphate + 2 H(+). Its pathway is pyrimidine metabolism; CTP biosynthesis via de novo pathway; CTP from UDP: step 2/2. Its activity is regulated as follows. Allosterically activated by GTP, when glutamine is the substrate; GTP has no effect on the reaction when ammonia is the substrate. The allosteric effector GTP functions by stabilizing the protein conformation that binds the tetrahedral intermediate(s) formed during glutamine hydrolysis. Inhibited by the product CTP, via allosteric rather than competitive inhibition. Catalyzes the ATP-dependent amination of UTP to CTP with either L-glutamine or ammonia as the source of nitrogen. Regulates intracellular CTP levels through interactions with the four ribonucleotide triphosphates. The chain is CTP synthase from Streptococcus pyogenes serotype M2 (strain MGAS10270).